We begin with the raw amino-acid sequence, 453 residues long: HTH-type pyridoxine biosynthesis transcriptional regulator PdxR (453 aa).

One can recognise an HTH gntR-type domain in the interval 15-83; it reads TSIPTQLTEQ…RGSGTTINPD (69 aa). Positions 43-62 form a DNA-binding region, H-T-H motif; that stretch reads SRSLSTQLGVSRGSVVTAYD.

In the C-terminal section; belongs to the class-I pyridoxal-phosphate-dependent aminotransferase family. It depends on pyridoxal 5'-phosphate as a cofactor.

Its function is as follows. May have a regulatory function in pyridoxine biosynthesis. Is said to also have an aminotransferase activity in valine biosynthesis as a double inactivation of ilvE and pdxR results in an auxotrophic requirement for valine. In Corynebacterium glutamicum (strain ATCC 13032 / DSM 20300 / JCM 1318 / BCRC 11384 / CCUG 27702 / LMG 3730 / NBRC 12168 / NCIMB 10025 / NRRL B-2784 / 534), this protein is HTH-type pyridoxine biosynthesis transcriptional regulator PdxR (pdxR).